The sequence spans 118 residues: p-cumate 2,3-dioxygenase system, ferredoxin component (118 aa).

The Rieske domain maps to 14 to 111 (VGLCATDDVA…VTVEGGQIFV (98 aa)). [2Fe-2S] cluster is bound by residues C54, H56, C74, and H77.

Belongs to the bacterial ring-hydroxylating dioxygenase ferredoxin component family. In terms of assembly, the p-cumate 2,3-dioxygenase multicomponent enzyme system is composed of an electron transfer component and a dioxygenase component (iron sulfur protein (ISP)). The electron transfer component is composed of a ferredoxin reductase (CmtAa) and a ferredoxin (CmtAd), and the dioxygenase component is formed of a large alpha subunit (CmtAb) and a small beta subunit (CmtAc). It depends on [2Fe-2S] cluster as a cofactor.

Its pathway is aromatic compound metabolism; p-cumate degradation; acetaldehyde and pyruvate from p-cumate. Component of the p-cumate 2,3-dioxygenase multicomponent enzyme system which catalyzes the incorporation of both atoms of molecular oxygen into p-cumate to form cis-2,3-dihydroxy-2,3-dihydro-p-cumate. Functions as an intermediate electron transfer protein via a specific interaction with iron sulfur protein components (ISP)(CmtAb and CmtAc). The polypeptide is p-cumate 2,3-dioxygenase system, ferredoxin component (Pseudomonas putida (Arthrobacter siderocapsulatus)).